A 325-amino-acid polypeptide reads, in one-letter code: Post-GPI attachment to proteins factor 2-like (325 aa).

The next 6 membrane-spanning stretches (helical) occupy residues 80 to 100, 130 to 150, 171 to 191, 205 to 225, 243 to 263, and 276 to 296; these read VVTALLPLVTLFTCFVTAYVF, YFWRFSIALHIGPRIPIAFVY, LLITLILVLNCIEIASLGGVT, IFITFMVCSLCYMLATIKLNG, WKKILFAVSILSTVGLLVFFA, and WFAFFEYLIAIANMLFHFTII.

Belongs to the PGAP2 family.

It is found in the membrane. This chain is Post-GPI attachment to proteins factor 2-like, found in Drosophila melanogaster (Fruit fly).